Reading from the N-terminus, the 471-residue chain is Arginine biosynthesis bifunctional protein ArgJ, mitochondrial (471 aa).

Substrate-binding residues include T190, K216, T239, E327, N466, and S471. T239 acts as the Nucleophile in catalysis.

Belongs to the ArgJ family. As to quaternary structure, heterodimer of an alpha and a beta chain. Post-translationally, the alpha and beta chains are autoproteolytically processed from a single precursor protein within the mitochondrion.

The protein localises to the mitochondrion matrix. It catalyses the reaction N(2)-acetyl-L-ornithine + L-glutamate = N-acetyl-L-glutamate + L-ornithine. It carries out the reaction L-glutamate + acetyl-CoA = N-acetyl-L-glutamate + CoA + H(+). It participates in amino-acid biosynthesis; L-arginine biosynthesis; L-ornithine and N-acetyl-L-glutamate from L-glutamate and N(2)-acetyl-L-ornithine (cyclic): step 1/1. Its pathway is amino-acid biosynthesis; L-arginine biosynthesis; N(2)-acetyl-L-ornithine from L-glutamate: step 1/4. In terms of biological role, catalyzes two activities which are involved in the cyclic version of arginine biosynthesis: the synthesis of acetylglutamate from glutamate and acetyl-CoA, and of ornithine by transacetylation between acetylornithine and glutamate. The chain is Arginine biosynthesis bifunctional protein ArgJ, mitochondrial from Coprinopsis cinerea (strain Okayama-7 / 130 / ATCC MYA-4618 / FGSC 9003) (Inky cap fungus).